We begin with the raw amino-acid sequence, 188 residues long: dCTP deaminase (188 aa).

DCTP is bound by residues 111 to 116 (KSTYAR), 135 to 137 (TLE), glutamine 156, tyrosine 170, and glutamine 180. Glutamate 137 serves as the catalytic Proton donor/acceptor.

This sequence belongs to the dCTP deaminase family. In terms of assembly, homotrimer.

The catalysed reaction is dCTP + H2O + H(+) = dUTP + NH4(+). It functions in the pathway pyrimidine metabolism; dUMP biosynthesis; dUMP from dCTP (dUTP route): step 1/2. Its function is as follows. Catalyzes the deamination of dCTP to dUTP. The chain is dCTP deaminase from Pseudomonas putida (strain W619).